Here is a 405-residue protein sequence, read N- to C-terminus: MSEKRRDNKGRILKTGESQRKDGRYLYKYIDSFGEPQFVYSWKLVATDRVPAGKRDCISLREKIAELQKDIHDGIDVVGKKMTLCQLYAKQNAQRPKVRKNTETGRKYLMDILKKDKLGVRSIDSIKPSDAKEWAIRMSENGYAYQTINNYKRSLKASFYIAIQDDCVRKNPFDFQLKAVLDDDTVPKTVLTEEQEEKLLAFAKADKTYSKNYDEILILLKTGLRISEFGGLTLPDLDFENRLVNIDHQLLRDTEIGYYIETPKTKSGERQVPMVEEAYQAFKRVLANRKNDKRVEIDGYSDFLFLNRKNYPKVASDYNGMMKGLVKKYNKYNEDKLPHITPHSLRHTFCTNYANAGMNPKALQYIMGHANIAMTLNYYAHATFDSAMAEMKRLNKEKQQERLVA.

The 85-residue stretch at 79-163 (GKKMTLCQLY…SLKASFYIAI (85 aa)) folds into the Core-binding (CB) domain. In terms of domain architecture, Tyr recombinase spans 186 to 392 (VPKTVLTEEQ…TFDSAMAEMK (207 aa)). Active-site residues include Arg-225, Lys-264, His-343, Arg-346, and His-369. Tyr-379 functions as the O-(3'-phospho-DNA)-tyrosine intermediate in the catalytic mechanism.

This sequence belongs to the 'phage' integrase family.

This is Transposase from transposon Tn1545 (int) from Streptococcus agalactiae serotype V (strain ATCC BAA-611 / 2603 V/R).